The sequence spans 212 residues: Methylthioribulose-1-phosphate dehydratase (212 aa).

The Zn(2+) site is built by His-98 and His-100.

The protein belongs to the aldolase class II family. MtnB subfamily. Zn(2+) serves as cofactor.

The enzyme catalyses 5-(methylsulfanyl)-D-ribulose 1-phosphate = 5-methylsulfanyl-2,3-dioxopentyl phosphate + H2O. Its pathway is amino-acid biosynthesis; L-methionine biosynthesis via salvage pathway; L-methionine from S-methyl-5-thio-alpha-D-ribose 1-phosphate: step 2/6. Its function is as follows. Catalyzes the dehydration of methylthioribulose-1-phosphate (MTRu-1-P) into 2,3-diketo-5-methylthiopentyl-1-phosphate (DK-MTP-1-P). In Picosynechococcus sp. (strain ATCC 27264 / PCC 7002 / PR-6) (Agmenellum quadruplicatum), this protein is Methylthioribulose-1-phosphate dehydratase.